We begin with the raw amino-acid sequence, 947 residues long: Isoleucine--tRNA ligase (947 aa).

Residues 57–67 (PYANGNIHLGH) carry the 'HIGH' region motif. An L-isoleucyl-5'-AMP-binding site is contributed by Glu568. Residues 609 to 613 (KMSKS) carry the 'KMSKS' region motif. Lys612 is a binding site for ATP. Zn(2+) contacts are provided by Cys908, Cys911, Cys926, and Cys929.

Belongs to the class-I aminoacyl-tRNA synthetase family. IleS type 1 subfamily. Monomer. It depends on Zn(2+) as a cofactor.

The protein resides in the cytoplasm. It carries out the reaction tRNA(Ile) + L-isoleucine + ATP = L-isoleucyl-tRNA(Ile) + AMP + diphosphate. Its function is as follows. Catalyzes the attachment of isoleucine to tRNA(Ile). As IleRS can inadvertently accommodate and process structurally similar amino acids such as valine, to avoid such errors it has two additional distinct tRNA(Ile)-dependent editing activities. One activity is designated as 'pretransfer' editing and involves the hydrolysis of activated Val-AMP. The other activity is designated 'posttransfer' editing and involves deacylation of mischarged Val-tRNA(Ile). The sequence is that of Isoleucine--tRNA ligase from Persephonella marina (strain DSM 14350 / EX-H1).